The sequence spans 374 residues: MIFLIFSFIVLLIFGLANVYIYKRLIKKITLFKYFYKIFSFIFIVLFLAQAVFLIFRRDEYLSDTWYEILAMFYAPTYCLFFMTLAWDFVKLILALMGKRDKTYNLILRLIFELSLIVLSVFLIYASINNALKTPEVKSVDVEIPNLKKDLKIVMLTDIHLGKNLHENFLDKLITKVNLQSPDMVVIVGDLIDTNPKDLKNYISKLNDFNSTYGTFYALGNHEYYHGINEVLDLLRKHTNMKILVNQNLDLGFIDIAGLGDLAGLDRGLYAPDLARIKVDLNTSKASILLTHQPKTALLYDLSDFDLVLSGHTHGGQIFPFMFLVKLQQGFVHGLYDLGEKTKLYVSSGAGFWGPSLRVFAPSEIVILNLKGKK.

6 residues coordinate a divalent metal cation: Asp158, His160, Asp190, Asn221, His312, and His314.

It belongs to the metallophosphoesterase superfamily. A divalent metal cation serves as cofactor.

This is an uncharacterized protein from Campylobacter jejuni subsp. jejuni serotype O:2 (strain ATCC 700819 / NCTC 11168).